The primary structure comprises 234 residues: Sugar fermentation stimulation protein A (234 aa).

The segment at residues 201–220 is a DNA-binding region (H-T-H motif); that stretch reads LLSEAQNKGVEVLAYKAELS.

It belongs to the SfsA family.

Functionally, binds to DNA non-specifically. Could be a regulatory factor involved in maltose metabolism. The chain is Sugar fermentation stimulation protein A from Salmonella agona (strain SL483).